Reading from the N-terminus, the 245-residue chain is Probable transcriptional regulatory protein CPR_1922 (245 aa).

It belongs to the TACO1 family.

The protein resides in the cytoplasm. In Clostridium perfringens (strain SM101 / Type A), this protein is Probable transcriptional regulatory protein CPR_1922.